The following is a 5495-amino-acid chain: Microtubule-associated protein futsch (5495 aa).

Disordered regions lie at residues 1-97, 656-975, 988-1074, 1086-1111, 1128-1167, 1185-1204, 1255-1275, 1306-1358, 1402-1840, 1866-2631, 2709-2810, 2830-4166, 4196-4230, 4362-4612, 4636-4668, 4687-4975, 5035-5065, 5101-5138, 5170-5199, and 5328-5350; these read MGDQ…DADG, AKAD…LKEE, RDEM…AEEE, ERKA…EQSK, KSRT…IGAP, SATI…DERI, KDAP…SGER, HEEA…EPNK, NQED…VVES, EIGK…PGFV, AKTV…KDFA, LPTL…DLSL, KAES…EASP, IIPD…ASQL, AQKS…DDSL, AFST…QMLA, KTVT…ERDQ, SYEL…EEHS, PSTE…QTWA, and GLPS…PKKE. Over residues 35 to 48 the composition is skewed to low complexity; sequence AKGAGDGPAQDAAQ. Composition is skewed to basic and acidic residues over residues 656 to 672, 696 to 716, and 758 to 795; these read AKAD…HEAD, EPEH…KKVE, and GKAD…EKKS. Low complexity-rich tracts occupy residues 797 to 806 and 819 to 831; these read PTTTPAARAP and PATK…TPAK. Residues 832 to 843 are compositionally biased toward basic and acidic residues; that stretch reads SAKEANNRKVLE. The span at 850–888 shows a compositional bias: low complexity; sequence RVQATSTVSRRVTSTASERRVQQQAEAKTAATGATQATQ. Positions 918-931 are enriched in basic and acidic residues; it reads KAADLKKTRLDKGG. Over residues 932-942 the composition is skewed to polar residues; it reads TTDSSLVSTPS. Basic and acidic residues-rich tracts occupy residues 962-975 and 988-1007; these read DAEK…LKEE and RDEM…REMP. Acidic residues predominate over residues 1012 to 1041; it reads GDGENEPDEEEEYLIIEKEEVEQYTEDSIV. Residues 1047–1065 show a composition bias toward basic and acidic residues; the sequence is MTKEEEIQKHQRDSQESEK. Basic and acidic residues-rich tracts occupy residues 1128 to 1140 and 1148 to 1163; these read KSRT…KPAE and PEEK…KDDQ. Residues 1187-1196 show a composition bias toward polar residues; it reads TIESGATTAP. 4 stretches are compositionally biased toward basic and acidic residues: residues 1306–1319, 1327–1337, 1343–1358, and 1408–1443; these read HEEA…KDSQ, SHKEESAKEEK, KENK…EPNK, and EQVK…KETS. 2 consecutive repeat copies span residues 1469–1502 and 1513–1539. Residues 1469–4032 are 53 X approximate repeat; that stretch reads REDTGSIESP…SPLASKESSR (2564 aa). Composition is skewed to basic and acidic residues over residues 1546 to 1555, 1571 to 1663, 1679 to 1696, 1718 to 1732, and 1748 to 1779; these read PESEAKDKKS, SVKD…DEKS, SVKD…RESI, and GIKD…RRDS. 17 consecutive repeat copies span residues 1622-1649, 1660-1686, 1690-1718, 1755-1782, 1790-1818, 1837-1865, 1874-1902, 1911-1939, 1948-1976, 1985-2013, 2022-2050, 2059-2087, 2096-2124, 2133-2161, 2170-2198, 2215-2243, and 2262-2292. Over residues 1804 to 1815 the composition is skewed to polar residues; it reads ERSQPESVTASR. 18 stretches are compositionally biased toward basic and acidic residues: residues 1887-1896, 1904-1942, 1960-1976, 1994-2007, 2041-2059, 2078-2096, 2115-2133, 2152-2170, 2189-2207, 2226-2244, 2263-2281, 2300-2318, 2337-2355, 2374-2391, 2419-2435, 2466-2482, 2560-2588, and 2604-2627; these read VKPESRRESS, HAED…ESDK, MKDE…ESVK, SAKD…ELSR, SVKD…ESVA, SIKD…ESVA, SIKD…ESAA, SVKD…RESM, SVKD…RRES, SVKD…ESKT, IKYD…EDKS, and SDHE…DKSR. The stretch at 2355 to 2391 is repeat 20; it reads AEKSPLPSKEASRPASVAESVKDEADKSKEESRRESM. 2 tandem repeats follow at residues 2703 to 2726 and 2761 to 2787. The span at 2764 to 2780 shows a compositional bias: basic and acidic residues; sequence ESKDDAAQLKSSVEDLR. The residue at position 2800 (S2800) is a Phosphoserine; by GSK3-beta. 3 consecutive repeat copies span residues 2820-2846, 2864-2892, and 2907-2933. Low complexity predominate over residues 2845–2861; the sequence is PQTSTPTSSPTVASVQP. Composition is skewed to basic and acidic residues over residues 2889–2914 and 2942–2954; these read AEER…KDAS and GPKD…KESS. Positions 2955 to 2966 are enriched in polar residues; sequence RPPSVSASITGD. 28 repeat units span residues 2956-2987, 3006-3034, 3049-3075, 3089-3117, 3131-3158, 3200-3224, 3228-3256, 3265-3293, 3302-3330, 3339-3367, 3376-3404, 3413-3441, 3450-3478, 3487-3515, 3524-3552, 3561-3589, 3598-3626, 3635-3663, 3672-3700, 3709-3737, 3746-3774, 3783-3811, 3820-3848, 3867-3894, 3895-3921, 3931-3958, 3968-3995, and 4005-4032. Basic and acidic residues-rich tracts occupy residues 2980–2996, 3017–3051, 3061–3075, 3087–3116, 3156–3168, 3175–3208, and 3226–3248; these read SVKD…ESIA, SQKD…ESRP, VPRE…KDTS, EDEK…KSQE, PMDK…EPSR, SIKH…KGEK, and IKDE…ESSK. A phosphoserine mark is found at S3067, S3071, and S3075. Basic and acidic residues predominate over residues 3300–3310; it reads SRPESEAESLK. Positions 3316 to 3327 are enriched in polar residues; it reads SQETSRPESVTE. 14 stretches are compositionally biased toward basic and acidic residues: residues 3350–3363, 3373–3399, 3419–3431, 3448–3465, 3484–3502, 3521–3539, 3558–3576, 3599–3613, 3632–3650, 3669–3687, 3710–3724, 3743–3761, 3780–3798, and 3817–3835; these read NAKD…EQRP, SIKD…RESV, SVKD…KEES, VKDE…ESVA, SVKD…ESGA, SIKD…ESVA, SVKD…DSVA, EAEK…ESVA, and SVKD…ESVA. Positions 3836–3850 are enriched in low complexity; sequence EKSSLASKKASRPAS. 8 stretches are compositionally biased toward basic and acidic residues: residues 3854-3872, 3891-3909, 3928-3946, 3965-3983, 4002-4020, 4039-4066, 4086-4095, and 4115-4141; these read SVKD…ESVA, SVKD…ESGA, SVKD…ESVT, SIKD…ESIK, SVKDETEKPE, and AKDE…KEAS. Polar residues-rich tracts occupy residues 4142-4152 and 4214-4223; these read RSLSVAETASS and QPDTGHTAST. Basic and acidic residues-rich tracts occupy residues 4362–4379, 4386–4410, and 4419–4432; these read IIPD…KSTA, DKST…KSSP, and IEEK…EKAQ. Over residues 4443–4461 the composition is skewed to low complexity; that stretch reads PESVASQPESVPSPSQSAA. Positions 4462-4481 are enriched in basic and acidic residues; sequence SHEHKEVELSESHKAEKSSR. Residues 4498–4508 show a composition bias toward polar residues; sequence RPASSTSQFST. Low complexity predominate over residues 4517–4528; that stretch reads ESLLHSLTTTET. Over residues 4529 to 4539 the composition is skewed to basic and acidic residues; that stretch reads VETKQMEEKSS. The span at 4540 to 4560 shows a compositional bias: low complexity; it reads FESVSTSVTKSTVLSSQSTVQ. Basic and acidic residues-rich tracts occupy residues 4575-4584 and 4639-4650; these read KVEDSSRRES and SNKEIKDARETK. 2 stretches are compositionally biased toward low complexity: residues 4651-4662 and 4703-4714; these read VTSQFTTTTSSA and TTASAVSSTSAS. Residues 4744–4754 show a composition bias toward acidic residues; the sequence is PEDEEPADDVD. Basic and acidic residues-rich tracts occupy residues 4755–4764 and 4788–4798; these read ERSSVKESRS and LVEEEHEHVEE. Positions 4804–4829 are enriched in low complexity; sequence TSTSKTTTLLQSSEQSSTTTSSTSKT. The segment covering 4835–4851 has biased composition (polar residues); sequence ESITLTQMDQQTSQSQG. The segment covering 4875–4905 has biased composition (low complexity); sequence GSAGSVIGAGAGAVAAGGKCESSAASIVSSS. A compositionally biased stretch (polar residues) spans 4915–4930; that stretch reads GKSSPGALTSESQSIP. S4950 is modified (phosphoserine; by GSK3-beta). Over residues 4955-4970 the composition is skewed to basic and acidic residues; it reads VSKDELKSLEMQHHSQ. The span at 5101 to 5112 shows a compositional bias: polar residues; sequence SYELQHSSSGVS. Residues 5185 to 5196 are compositionally biased toward low complexity; it reads SQSSESVESSSQ.

Heterodimer of a heavy and a light chain. Interacts with Fmr1. Found in a complex with tubulin and Futsch. Several minor light chains can be created with markedly different pIs. Post-translationally, phosphorylated by SGG/GSK3. Phosphorylated by LRRK2 at the presynapse of neuromuscular junctions, which negatively regulates the activity controlling synaptic differentiation. In terms of tissue distribution, neuronal cells within the PNS and CNS.

It localises to the cytoplasm. It is found in the cytoskeleton. In terms of biological role, during embryogenesis, necessary for dendritic and axonal organization and growth at the neuromuscular junction through the regulation of the synaptic microtubule cytoskeleton. Microtubule hairpin loops are found within a small subset of synaptic boutons at the neuromuscular synapse, these loops are stabilized by futsch. Loop morphology and dynamics suggest that rearrangement of these microtubule-based loops is a critical component of the process of bouton division and for subsequent nerve-terminal growth and branching. Translation is repressed by Fmr1. Together with ringer, required for neuromuscular junction (NMJ) bouton growth by regulating synaptic microtubules. Function with ringer in maintaining microtubule stability and dynamics, is essential for promoting axon regeneration in response to peripheral (PNS) and central nervous system (CNS) injury. In response to axotomy, acts downstream of a stress response cascade involving Xbp1 splicing, to control axon regeneration. The chain is Microtubule-associated protein futsch (futsch) from Drosophila melanogaster (Fruit fly).